The sequence spans 797 residues: Protocadherin-3 (797 aa).

Positions 1 to 30 are cleaved as a signal peptide; that stretch reads METALAKIPQQRQVFFLTILSLLWKSSSEA. Topologically, residues 31–691 are extracellular; sequence IRYSMPEETE…DNYDVLTLYL (661 aa). Cadherin domains are found at residues 35 to 133, 138 to 242, 247 to 346, 351 to 450, and 455 to 560; these read MPEE…SPEF, MLLT…SPQF, YKVQ…APEL, LTVL…APAF, and YTMF…APFV. Asparagine 169, asparagine 276, and asparagine 417 each carry an N-linked (GlcNAc...) asparagine glycan. Asparagine 566 carries an N-linked (GlcNAc...) asparagine glycan. One can recognise a Cadherin 6 domain in the interval 567 to 670; it reads ASAPCTELLP…VVDGFSQPYL (104 aa). Residues 692–712 form a helical membrane-spanning segment; that stretch reads VIALASVSSLFLLSVVLFVGV. Over 713 to 797 the chain is Cytoplasmic; that stretch reads RLCRRAREAS…AVVHNSVGFY (85 aa).

Expressed in brain.

The protein localises to the cell membrane. Its function is as follows. Potential calcium-dependent cell-adhesion protein. May be involved in the establishment and maintenance of specific neuronal connections in the brain. The polypeptide is Protocadherin-3 (Pcdh3) (Rattus norvegicus (Rat)).